A 70-amino-acid polypeptide reads, in one-letter code: Exodeoxyribonuclease 7 small subunit (70 aa).

It belongs to the XseB family. In terms of assembly, heterooligomer composed of large and small subunits.

It localises to the cytoplasm. It carries out the reaction Exonucleolytic cleavage in either 5'- to 3'- or 3'- to 5'-direction to yield nucleoside 5'-phosphates.. Bidirectionally degrades single-stranded DNA into large acid-insoluble oligonucleotides, which are then degraded further into small acid-soluble oligonucleotides. The polypeptide is Exodeoxyribonuclease 7 small subunit (Magnetococcus marinus (strain ATCC BAA-1437 / JCM 17883 / MC-1)).